Reading from the N-terminus, the 241-residue chain is MKVLLVFDFDNTIIDDNSDTWIVQCAPDKKLPIELQDSYQKGLWTEFMGRVFKYLRDEGVKADELKRAVTSLPFTSGMIELLSFLRMNKDRFDCIIISDSNSIFIDWVLEAAAFHDVFDHVFTNPASFDSSGRLTVKNYHAHSCTRCPKNLCKNTVLGEFIDKQLQKGVRYTRIVYIGDGGNDVCPVTFLKKNDVAMPREGYTLHRTLAKMSQNLEPMESSIVVWSSGVEIISHLQFLIKM.

Asp8 acts as the Nucleophile in catalysis. Residues Asp8 and Asp10 each contribute to the Mg(2+) site. Residue Asp10 is the Proton donor of the active site. Asp19 and Asp99 together coordinate substrate. A Mg(2+)-binding site is contributed by Asp179.

The protein belongs to the HAD-like hydrolase superfamily. PHOSPHO family. Mg(2+) is required as a cofactor.

The catalysed reaction is pyridoxal 5'-phosphate + H2O = pyridoxal + phosphate. In terms of biological role, phosphatase that has high activity toward pyridoxal 5'-phosphate (PLP). Also active at much lower level toward pyrophosphate, phosphoethanolamine (PEA), phosphocholine (PCho), phospho-l-tyrosine, fructose-6-phosphate, p-nitrophenyl phosphate, and h-glycerophosphate. This chain is Pyridoxal phosphate phosphatase PHOSPHO2 (Phospho2), found in Mus musculus (Mouse).